The chain runs to 147 residues: Small ribosomal subunit protein uS5 (147 aa).

Residues 9–72 (FEEVIVDIGR…DDAFKNIVEV (64 aa)) enclose the S5 DRBM domain.

This sequence belongs to the universal ribosomal protein uS5 family. In terms of assembly, part of the 30S ribosomal subunit. Contacts proteins S4 and S8.

Functionally, with S4 and S12 plays an important role in translational accuracy. Located at the back of the 30S subunit body where it stabilizes the conformation of the head with respect to the body. The chain is Small ribosomal subunit protein uS5 from Campylobacter fetus subsp. fetus (strain 82-40).